The chain runs to 764 residues: 1,4-alpha-glucan branching enzyme GlgB (764 aa).

The segment at 1–46 is disordered; the sequence is MSAARQPSPTVRDKAAPEPAAPAAPKGARAPRARRAAPPHGVRPAP. Residues 17–28 show a composition bias toward low complexity; sequence PEPAAPAAPKGA. The active-site Nucleophile is Asp-440. Glu-493 serves as the catalytic Proton donor.

This sequence belongs to the glycosyl hydrolase 13 family. GlgB subfamily. Monomer.

It carries out the reaction Transfers a segment of a (1-&gt;4)-alpha-D-glucan chain to a primary hydroxy group in a similar glucan chain.. It participates in glycan biosynthesis; glycogen biosynthesis. Its function is as follows. Catalyzes the formation of the alpha-1,6-glucosidic linkages in glycogen by scission of a 1,4-alpha-linked oligosaccharide from growing alpha-1,4-glucan chains and the subsequent attachment of the oligosaccharide to the alpha-1,6 position. In Kitasatospora aureofaciens (Streptomyces aureofaciens), this protein is 1,4-alpha-glucan branching enzyme GlgB (glgB).